Reading from the N-terminus, the 547-residue chain is Probable pectinesterase/pectinesterase inhibitor 12 (547 aa).

Residues 1 to 23 (MALSSFNLSSLLFLLFFTPSVFS) form the signal peptide. Positions 31–185 (NPHETSATSF…YKHISNSLSA (155 aa)) are pectinesterase inhibitor 12. 4 N-linked (GlcNAc...) asparagine glycosylation sites follow: Asn-131, Asn-247, Asn-260, and Asn-303. The pectinesterase 12 stretch occupies residues 237–533 (SLVVAADGTG…FTATEFITGD (297 aa)). Substrate is bound by residues Thr-312 and Gln-342. The active-site Proton donor; for pectinesterase activity is Asp-365. A disulfide bridge connects residues Cys-379 and Cys-399. Asp-386 (nucleophile; for pectinesterase activity) is an active-site residue. 2 N-linked (GlcNAc...) asparagine glycosylation sites follow: Asn-432 and Asn-443. Residues Arg-454 and Trp-456 each contribute to the substrate site. The N-linked (GlcNAc...) asparagine glycan is linked to Asn-523.

The protein in the N-terminal section; belongs to the PMEI family. This sequence in the C-terminal section; belongs to the pectinesterase family. As to expression, expressed in siliques.

Its subcellular location is the secreted. It localises to the cell wall. It catalyses the reaction [(1-&gt;4)-alpha-D-galacturonosyl methyl ester](n) + n H2O = [(1-&gt;4)-alpha-D-galacturonosyl](n) + n methanol + n H(+). The protein operates within glycan metabolism; pectin degradation; 2-dehydro-3-deoxy-D-gluconate from pectin: step 1/5. Functionally, acts in the modification of cell walls via demethylesterification of cell wall pectin. This Arabidopsis thaliana (Mouse-ear cress) protein is Probable pectinesterase/pectinesterase inhibitor 12 (PME12).